A 261-amino-acid polypeptide reads, in one-letter code: Small ribosomal subunit protein mS23 (261 aa).

Residues 233–261 form a disordered region; sequence RASSPSASWTNETEEEQKPIDQDVEEIQL.

It belongs to the mitochondrion-specific ribosomal protein mS23 family. In terms of assembly, component of the mitochondrial small ribosomal subunit.

The protein localises to the mitochondrion. This Kluyveromyces lactis (strain ATCC 8585 / CBS 2359 / DSM 70799 / NBRC 1267 / NRRL Y-1140 / WM37) (Yeast) protein is Small ribosomal subunit protein mS23 (RSM25).